The following is a 479-amino-acid chain: Zinc metalloproteinase/disintegrin (479 aa).

Positions 1–20 are cleaved as a signal peptide; the sequence is MIQVLLVTICLAAFPYQGSS. Residues 21–187 constitute a propeptide that is removed on maturation; that stretch reads IILESGKVND…PIKKASQLIV (167 aa). The Peptidase M12B domain occupies 193–390; sequence RYMEIVIVVD…ENPPCILNKP (198 aa). Residues glutamate 196 and aspartate 280 each contribute to the Ca(2+) site. Intrachain disulfides connect cysteine 304–cysteine 385, cysteine 344–cysteine 369, and cysteine 346–cysteine 352. Histidine 329 is a Zn(2+) binding site. Glutamate 330 is a catalytic residue. Zn(2+)-binding residues include histidine 333 and histidine 339. Residues cysteine 385 and asparagine 388 each coordinate Ca(2+). Residues 390 to 414 constitute a propeptide that is removed on maturation; it reads PLRTDTVSTPVSGNELLEAGKDYDR. One can recognise a Disintegrin domain in the interval 398-479; the sequence is TPVSGNELLE…ADCPRNPYHA (82 aa). 3 disulfides stabilise this stretch: cysteine 435/cysteine 441, cysteine 440/cysteine 465, and cysteine 453/cysteine 472. The Cell attachment site signature appears at 457–459; sequence RGD.

This sequence belongs to the venom metalloproteinase (M12B) family. P-II subfamily. P-IIa sub-subfamily. Monomer. The cofactor is Zn(2+). As to expression, expressed by the venom gland.

It is found in the secreted. In terms of biological role, snake venom metalloproteinase that impairs hemostasis in the envenomed animal. Its function is as follows. Inhibits platelet aggregation induced by ADP, thrombin, platelet-activating factor and collagen. Acts by inhibiting fibrinogen interaction with platelet receptors GPIIb/GPIIIa (ITGA2B/ITGB3). This chain is Zinc metalloproteinase/disintegrin, found in Deinagkistrodon acutus (Hundred-pace snake).